Consider the following 191-residue polypeptide: Ubiquinol-cytochrome c reductase iron-sulfur subunit (191 aa).

The chain crosses the membrane as a helical span at residues 18-35 (ATAATGVVVTGAAVWPLI). The Rieske domain maps to 94–189 (RDTSAENANK…AAFVDETTIK (96 aa)). Residues 95–116 (DTSAENANKPGAEATDENRTLP) form a disordered region. [2Fe-2S] cluster contacts are provided by cysteine 133, histidine 135, cysteine 153, and histidine 156. Cysteines 138 and 155 form a disulfide.

The protein belongs to the Rieske iron-sulfur protein family. The main subunits of complex b-c1 are: cytochrome b, cytochrome c1 and the Rieske protein. Requires [2Fe-2S] cluster as cofactor.

Its subcellular location is the cell membrane. The catalysed reaction is a quinol + 2 Fe(III)-[cytochrome c](out) = a quinone + 2 Fe(II)-[cytochrome c](out) + 2 H(+)(out). Functionally, component of the ubiquinol-cytochrome c reductase complex (complex III or cytochrome b-c1 complex), which is a respiratory chain that generates an electrochemical potential coupled to ATP synthesis. The sequence is that of Ubiquinol-cytochrome c reductase iron-sulfur subunit (petA) from Rhodobacter capsulatus (strain ATCC BAA-309 / NBRC 16581 / SB1003).